Consider the following 226-residue polypeptide: Purine nucleoside phosphorylase Cj1217c (226 aa).

Residues H58, C93, and H109 each coordinate Zn(2+).

Belongs to the purine nucleoside phosphorylase YfiH/LACC1 family. In terms of assembly, homodimer. It depends on Cu(2+) as a cofactor. Requires Zn(2+) as cofactor.

It carries out the reaction adenosine + phosphate = alpha-D-ribose 1-phosphate + adenine. The catalysed reaction is S-methyl-5'-thioadenosine + phosphate = 5-(methylsulfanyl)-alpha-D-ribose 1-phosphate + adenine. The enzyme catalyses inosine + phosphate = alpha-D-ribose 1-phosphate + hypoxanthine. It catalyses the reaction adenosine + H2O + H(+) = inosine + NH4(+). In terms of biological role, purine nucleoside enzyme that catalyzes the phosphorolysis of adenosine and inosine nucleosides, yielding D-ribose 1-phosphate and the respective free bases, adenine and hypoxanthine. Also catalyzes the phosphorolysis of S-methyl-5'-thioadenosine into adenine and S-methyl-5-thio-alpha-D-ribose 1-phosphate. Also has adenosine deaminase activity. The protein is Purine nucleoside phosphorylase Cj1217c of Campylobacter jejuni subsp. jejuni serotype O:2 (strain ATCC 700819 / NCTC 11168).